The sequence spans 510 residues: MQLRLGEPPLTQAECALVYCFAPSGENATFSLPAEIASLDEKVWSGLVAEAAQEQKFQGKPNSSLALRLPGPIRKLVLVGLGDPAALTLEALRRATANGLRQAHSLKAKQVVLSLPDTGLDQVRAVQAVAEASLLVAHQDNRFKSPPKPEEERGFSVEEVTLLVPGLAQARQDYENALQRATEMAAGTILARELVAAPANVVTPPALAETARQLAQDYGLEVEILGREECQALGMGAFLGVAQASDLPPQFIHLTYKPKEGDPVAKLALVGKGLTFDSGGLNIKTDSRSIAMMKTDMGGAAAVLGAARALAALKPQVEVHFIVAATENMISGRALHPGDILTASNGKTIEVNNTDAEGRLTLADALVFAEKLGVDAIVDLATLTGACVIALGEEIAGLFTPDEKLAQELQQAANLSGEKIWRLPLEESYFEGLSSTVADMKNTGPRSGGSITAALFLKQFVEKTPWAHLDIAGPVWAEKDSGYTNKGATGYGVRTLVEWVLAREMAAASS.

2 residues coordinate Mn(2+): Lys272 and Asp277. Residue Lys284 is part of the active site. Mn(2+) is bound by residues Asp296, Asp355, and Glu357. Residue Arg359 is part of the active site.

It belongs to the peptidase M17 family. It depends on Mn(2+) as a cofactor.

It localises to the cytoplasm. It catalyses the reaction Release of an N-terminal amino acid, Xaa-|-Yaa-, in which Xaa is preferably Leu, but may be other amino acids including Pro although not Arg or Lys, and Yaa may be Pro. Amino acid amides and methyl esters are also readily hydrolyzed, but rates on arylamides are exceedingly low.. It carries out the reaction Release of an N-terminal amino acid, preferentially leucine, but not glutamic or aspartic acids.. Presumably involved in the processing and regular turnover of intracellular proteins. Catalyzes the removal of unsubstituted N-terminal amino acids from various peptides. In Synechococcus sp. (strain JA-3-3Ab) (Cyanobacteria bacterium Yellowstone A-Prime), this protein is Probable cytosol aminopeptidase.